The chain runs to 673 residues: Beta-galactosidase GalA (673 aa).

Arginine 105 contributes to the substrate binding site. Residue cysteine 109 participates in Zn(2+) binding. Asparagine 143 is a binding site for substrate. Glutamate 144 functions as the Proton donor in the catalytic mechanism. Zn(2+) is bound by residues cysteine 149, cysteine 151, and cysteine 154. Glutamate 308 serves as the catalytic Nucleophile. Substrate is bound by residues tryptophan 316 and 356-359; that span reads EKFH.

This sequence belongs to the glycosyl hydrolase 42 family. In terms of assembly, homodimer.

It catalyses the reaction Hydrolysis of terminal non-reducing beta-D-galactose residues in beta-D-galactosides.. Inhibited by hydrolysis end products D-galactose and D-glucose. The hydrolysis of o-nitrophenyl-beta-D-galactopyranoside (ONPG) is slightly activated by monovalent ions, Na(+) and K(+). Concentrations of these ions in the range of 1-100 mM exert the stimulating effects. The presence of 1 mM Mn(2+) together with the presence of 10 mM Na(+) slightly stimulates the activity, while presence of 10 mM Mn(2+) inhibits the activity by about 40%. In terms of biological role, catalyzes the hydrolysis of lactose to its constituent monosaccharides glucose and galactose. Possesses a low level of transgalactosylation activity for the production of galacto-oligosaccharides (GOS) from lactose. The protein is Beta-galactosidase GalA of Bacillus licheniformis (strain ATCC 14580 / DSM 13 / JCM 2505 / CCUG 7422 / NBRC 12200 / NCIMB 9375 / NCTC 10341 / NRRL NRS-1264 / Gibson 46).